Here is a 970-residue protein sequence, read N- to C-terminus: Transposase for insertion sequence element IS1071 in transposon Tn5271 (970 aa).

The protein belongs to the transposase 7 family.

Functionally, required for transposition of transposon Tn5271. The polypeptide is Transposase for insertion sequence element IS1071 in transposon Tn5271 (Comamonas testosteroni (Pseudomonas testosteroni)).